We begin with the raw amino-acid sequence, 1855 residues long: MSSAPTTQQNLAALPAPAMSDTGITSHIASRYHSHLPISTLSTQGYIAVNTYTNSAKGPNGGKDGSAMGAAEELASRMWARLGHRQENQAAIFLGESGTGKTTIRSHLLSSLLQYSSTPLSKKLSFAAFVFDSLTTTKSVTAPTASKAGLFFELQYDTGSSLHPTLIGGKVLDHRLERSRVATVPPGERNFHVLYYLLAGTSDDEKEHLGLNTGITAGTGNRSSLGTQKRWRYLGHPSQLKVGINDAEGFQHFKTALRNLEFPREEIAHMCEILAAILHIGQLEFMTSQSTTPAPDESGGYGHEGGEEITVVKNKDVLSMIAAFLGVGDRTLEQSLGYRTKMLRRERVTIMLDPKGARENADELARTLYSLLVALVMEKINQKTCAVEEAVANTISVVDFPGFADTSSTGSVLDQLLNNAATECLYNFCLQSFFERKAELLETEEVQVPLTSYFDNSDAVKGLLKPGNGLLSILDDQMRRGKTDLQLADSLRKRFEGKNPAIEVTSGTVQLPGANFATQNTSQIFTVKHFAGEVKYPVDGLLEENGEVISGDLMNLVNSSSSPFVAELFGQEALNKVVHPDDRNAVQQASVASKPSRMPSMARRRGGKAGRFGSRRGGDIDEEKDSDEGRARSVSRHRHNPKSADTQQGASAQFLSSLDNINKSLTAPNTNPYFFFCLKPNDRRIANQFDSKCVRQQIQTLGIAELSQRLKNADFSIFMPFGEFLGSAEGEVSVVGSEREKAEMILDEKSWPKNEARVGSTGVFLSERCWRQIVRAGDLGVVPMPPSDENPFNNPESLTPMDGKRGFGESKVHLLQTPGSAIYSDDKAAGYFGSRDMDAKSDAGASALREGDMFRNLETREELAEKGNEVTTTPIEERPKSASRVRWLVLVYVLTWWCPDWAIRIIGRMPRQDIRMAWREKVAINFIIWLSCAFVVFFMVGFPRIICPTQHVFSPSELTSYDGKNSDAYVAIRGNVFDLGAFIPQHYPSIVPASALEKYAGTDATNLFPVQVSAMCQGTDPDGTIDAAVQLNYQNRNYTGQNLISTTDNNAQYHDFRWATNDSRPAWFTEQMIFLRGHYWKGSVGYSPQYLKTLAKKSNQVAYINNRVYDFTDYIAGGRAPQYPPGEERPDTLPDSNFMDSRVVDLFSQRSGEDVTKYWDALNIDTGLRDRMQICLDNLFYVGQLDTRDSPKCQFAKYILLAVSIMLVSVICFKFLAALQFGKKNIPENLDKFIICTVPAYTEDEDSLRRALDSAARTRYDDKRKLLFVICDGMIIGQGNDRPTPRIVLDILGVPETVDPEPLSFESLGEGQKQHNMGKVYSGLYEVQGHIVPFIVVVKVGKPSEVSRPGNRGKRDSQMILMRFLNRVHYNLAMTPLELELHHQIRNVIGVNPTFYEFLLQIDADTVVAPDSCTRFVSAMINDTKIIAVCGETALTNAKASFITMMQVYEYYISHNLTKAFESLFGSVTCLPGCFTMYRIRAAETGKPLFVSREIVNDYSETRVDTLHMKNLLHLGEDRFLTTLLMKYHSKYKTKYIMRAHAWTIAPDSWAVFMSQRRRWINSTVHNLIEVIPLQQLCGFCCFSMRFVVFLDLLSTIVQPVIVGYIVYLIVQVATNPASTATTAFILIAAIYGLQAIIFIVRRKWEMVGWMIIYILATPIFSFCLPLIAFWNMDDFSWGNTRMVTGEKGKQILVSDEGKFNPDDIPRKKWEEYQAELWDAQTRDDAQSEMSGISYGTKSWHPAASEYGYAMSQHNMSTLSVPHMPHNGSRMSLLTSDNGMGMQQRDYSASDIDMSDMPNDDAILAEIREILATADLMTVTKKSIKAELERRFGVPMDSRRQYIGSATEAILSGQL.

The Myosin motor domain maps to 1 to 778 (MSSAPTTQQN…CWRQIVRAGD (778 aa)). ATP is bound at residue 95-102 (GESGTGKT). 3 N-linked (GlcNAc...) asparagine glycosylation sites follow: Asn-221, Asn-520, and Asn-558. The disordered stretch occupies residues 585–650 (AVQQASVASK…PKSADTQQGA (66 aa)). An actin-binding region spans residues 658–682 (LDNINKSLTAPNTNPYFFFCLKPND). Asn-662 carries N-linked (GlcNAc...) asparagine glycosylation. A run of 2 helical transmembrane segments spans residues 887–907 (WLVLVYVLTWWCPDWAIRIIG) and 922–942 (VAINFIIWLSCAFVVFFMVGF). One can recognise a Cytochrome b5 heme-binding domain in the interval 950 to 1008 (QHVFSPSELTSYDGKNSDAYVAIRGNVFDLGAFIPQHYPSIVPASALEKYAGTDATNLF). Residues Asn-1037 and Asn-1061 are each glycosylated (N-linked (GlcNAc...) asparagine). Residues 1199–1219 (ILLAVSIMLVSVICFKFLAAL) traverse the membrane as a helical segment. 3 N-linked (GlcNAc...) asparagine glycosylation sites follow: Asn-1422, Asn-1456, and Asn-1562. The next 3 helical transmembrane spans lie at 1587–1607 (FVVFLDLLSTIVQPVIVGYIV), 1621–1641 (ATTAFILIAAIYGLQAIIFIV), and 1650–1670 (WMIIYILATPIFSFCLPLIAF). Residues Asn-1755 and Asn-1767 are each glycosylated (N-linked (GlcNAc...) asparagine). A DEK-C domain is found at 1797 to 1852 (MPNDDAILAEIREILATADLMTVTKKSIKAELERRFGVPMDSRRQYIGSATEAILS).

In the N-terminal section; belongs to the TRAFAC class myosin-kinesin ATPase superfamily. Myosin family. It in the C-terminal section; belongs to the chitin synthase family. Class V subfamily.

Its subcellular location is the apical cell membrane. The protein resides in the cell septum. The protein localises to the cell tip. The enzyme catalyses [(1-&gt;4)-N-acetyl-beta-D-glucosaminyl](n) + UDP-N-acetyl-alpha-D-glucosamine = [(1-&gt;4)-N-acetyl-beta-D-glucosaminyl](n+1) + UDP + H(+). Polymerizes chitin, a structural polymer of the cell wall and septum, by transferring the sugar moiety of UDP-GlcNAc to the non-reducing end of the growing chitin polymer. This is Chitin synthase 5 from Zymoseptoria tritici (strain CBS 115943 / IPO323) (Speckled leaf blotch fungus).